The sequence spans 359 residues: MGICDPIHQLGMWDDFNSSFPSTSATMILEVDKCLEDQIPIMEKRLDNETEDTSHGTVGTSNRYEPETSKPVEKVLRRLAQNREAARKSRLRKKAYVQQLENSKLKLIQLEQELERARKQGMCVGGGVDASQLSYSGTASSGTAVFDMEYGHWVEEQTRQTNDLRIALHSQIGEAELRIIVDGYLNHYFDLFRMKATAAKADVLYIMSGMWKTSAERFFMWIGGFRPSELLKVLTPHLELLTEQQLREVCNLTQSCQQAEDALSQGMVKLHQILAEAVAAGRLGEGNYTLPQMGPAIEKLEDLVRFVNQADHLRQETLQQMSRILNTCQAAQGLLALGEYFERLRVLSSQWATRLREPT.

A compositionally biased stretch (basic and acidic residues) spans 44–54 (KRLDNETEDTS). The tract at residues 44 to 72 (KRLDNETEDTSHGTVGTSNRYEPETSKPV) is disordered. The bZIP domain occupies 72–135 (VEKVLRRLAQ…GGVDASQLSY (64 aa)). Residues 73 to 125 (EKVLRRLAQNREAARKSRLRKKAYVQQLENSKLKLIQLEQELERARKQGMCVG) are a coiled coil. The basic motif stretch occupies residues 74–94 (KVLRRLAQNREAARKSRLRKK). The leucine-zipper stretch occupies residues 100 to 114 (LENSKLKLIQLEQEL). A DOG1 domain is found at 143 to 354 (TAVFDMEYGH…RVLSSQWATR (212 aa)).

Belongs to the bZIP family. In terms of assembly, binds DNA as a dimer.

Its subcellular location is the nucleus. Its function is as follows. Transcriptional activator that binds specifically to the DNA sequence 5'-TGACG-3'. Recognizes ocs elements like the as-1 motif of the cauliflower mosaic virus 35S promoter. Binding to the as-1-like cis elements mediate auxin- and salicylic acid-inducible transcription. Could also bind to the Hex-motif (5'-TGACGTGG-3') another cis-acting element found in plant histone promoters. In Nicotiana tabacum (Common tobacco), this protein is TGACG-sequence-specific DNA-binding protein TGA-1A (TGA1A).